Reading from the N-terminus, the 384-residue chain is Probable circularly permuted 1,3-beta-glucanase PGA52 (384 aa).

An N-terminal signal peptide occupies residues 1 to 17 (MLFSSLLVSTLVSVATA). Residues N118, N128, N170, N210, and N244 are each glycosylated (N-linked (GlcNAc...) asparagine). The ExDxxE motif motif lies at 254 to 259 (EFDIFE). N-linked (GlcNAc...) asparagine glycans are attached at residues N262 and N318. The GPI-anchor amidated serine moiety is linked to residue S361. Positions 362-384 (GGVSYQPSFITNLLMTVLTLWVI) are cleaved as a propeptide — removed in mature form.

This sequence belongs to the PGA52 family.

It localises to the cell membrane. The catalysed reaction is Hydrolysis of (1-&gt;3)-beta-D-glucosidic linkages in (1-&gt;3)-beta-D-glucans.. Functionally, probable circularly permuted 1,3-beta-glucanase involved in cell wall modification through beta-1,3-glucan network alterations such as increased branching or remodeling. In Candida albicans (strain SC5314 / ATCC MYA-2876) (Yeast), this protein is Probable circularly permuted 1,3-beta-glucanase PGA52 (PGA52).